The chain runs to 58 residues: Mesomartoxin (58 aa).

A signal peptide spans 1–29 (MMSRLSVFILIALVLSVIIDVLNNSKVEG). 3 disulfides stabilise this stretch: C31–C49, C35–C54, and C39–C56.

It belongs to the short scorpion toxin superfamily. Potassium channel inhibitor family. Alpha-KTx 26 subfamily. Expressed by the venom gland.

It localises to the secreted. In terms of biological role, recombinant toxin that reversibly blocks the voltage-gated potassium channels Shaker (IC(50)=0.054 nM), rKv1.2/KCNA2 (IC(50)=15.6 nM), and rKv1.3/KCNA3 (IC(50)=12.5 uM). In Olivierus martensii (Manchurian scorpion), this protein is Mesomartoxin.